Reading from the N-terminus, the 294-residue chain is Homoserine kinase (294 aa).

An ATP-binding site is contributed by 83–93 (RPKSGLGSSGA).

It belongs to the GHMP kinase family. Homoserine kinase subfamily.

It is found in the cytoplasm. It carries out the reaction L-homoserine + ATP = O-phospho-L-homoserine + ADP + H(+). Its pathway is amino-acid biosynthesis; L-threonine biosynthesis; L-threonine from L-aspartate: step 4/5. In terms of biological role, catalyzes the ATP-dependent phosphorylation of L-homoserine to L-homoserine phosphate. The protein is Homoserine kinase of Pyrococcus abyssi (strain GE5 / Orsay).